The primary structure comprises 248 residues: Mannose-binding protein C (248 aa).

A signal peptide spans 1 to 20; sequence MSLFPSLPLLLLSVVATSYS. In terms of domain architecture, Collagen-like spans 42 to 99; it reads GINGFPGKDGRDGTKGEKGEPGQGLRGLQGPPGKLGPPGNPGPSGSPGPKGQKGDPGE. The tract at residues 43–111 is disordered; sequence INGFPGKDGR…DCDSSLAASE (69 aa). Position 47 is a 4-hydroxyproline (P47). The span at 49–61 shows a compositional bias: basic and acidic residues; the sequence is KDGRDGTKGEKGE. 4-hydroxyproline occurs at positions 73, 79, 82, and 88. Positions 75-87 are enriched in pro residues; the sequence is KLGPPGNPGPSGS. Positions 112-130 form a coiled coil; it reads RKALQTEMAHIKKWLTFSL. A C-type lectin domain is found at 134–245; sequence VGNKFFLTNG…CSSSHLALCE (112 aa). 2 cysteine pairs are disulfide-bonded: C155–C244 and C222–C236.

As to quaternary structure, oligomeric complex of 3 or more homotrimers. Interacts with MASP1 and MASP2. Interacts with MEP1A and MEP1B and may inhibit their catalytic activity. Hydroxylation on proline residues within the sequence motif, GXPG, is most likely to be 4-hydroxy as this fits the requirement for 4-hydroxylation in vertebrates.

It localises to the secreted. Functionally, calcium-dependent lectin involved in innate immune defense. Binds mannose, fucose and N-acetylglucosamine on different microorganisms and activates the lectin complement pathway. Binds to late apoptotic cells, as well as to apoptotic blebs and to necrotic cells, but not to early apoptotic cells, facilitating their uptake by macrophages. The sequence is that of Mannose-binding protein C (MBL2) from Trachypithecus obscurus (Dusky leaf-monkey).